A 299-amino-acid polypeptide reads, in one-letter code: ATP phosphoribosyltransferase (299 aa).

The protein belongs to the ATP phosphoribosyltransferase family. Long subfamily. In terms of assembly, equilibrium between an active dimeric form, an inactive hexameric form and higher aggregates. Interconversion between the various forms is largely reversible and is influenced by the natural substrates and inhibitors of the enzyme. Mg(2+) serves as cofactor.

It localises to the cytoplasm. The enzyme catalyses 1-(5-phospho-beta-D-ribosyl)-ATP + diphosphate = 5-phospho-alpha-D-ribose 1-diphosphate + ATP. It functions in the pathway amino-acid biosynthesis; L-histidine biosynthesis; L-histidine from 5-phospho-alpha-D-ribose 1-diphosphate: step 1/9. Feedback inhibited by histidine. Catalyzes the condensation of ATP and 5-phosphoribose 1-diphosphate to form N'-(5'-phosphoribosyl)-ATP (PR-ATP). Has a crucial role in the pathway because the rate of histidine biosynthesis seems to be controlled primarily by regulation of HisG enzymatic activity. This Enterobacter sp. (strain 638) protein is ATP phosphoribosyltransferase.